A 132-amino-acid chain; its full sequence is MTLAQVEYRGTGRRKNSVARVRLVPGEGNITVNNRDVREYLPFESLILDLNQPFDVTETKGNYDVLVNVHGGGFTGQAQAIRHGIARALLEADPEYRGSLKRAGLLTRDPRMKERKKPGLKAARRSPQFSKR.

Residues 101–132 form a disordered region; that stretch reads KRAGLLTRDPRMKERKKPGLKAARRSPQFSKR. Residues 113–132 show a composition bias toward basic residues; that stretch reads KERKKPGLKAARRSPQFSKR.

The protein belongs to the universal ribosomal protein uS9 family.

This Staphylococcus aureus (strain USA300) protein is Small ribosomal subunit protein uS9.